The primary structure comprises 589 residues: Serine/threonine-protein phosphatase 2A 65 kDa regulatory subunit A alpha isoform (589 aa).

The residue at position 2 (Ala2) is an N-acetylalanine. HEAT repeat units follow at residues 8–46 (DSLY…GVER), 47–84 (TRSE…GGPE), 85–123 (YVHC…SPSD), 124–161 (LEAH…VSSA), 162–200 (VKAE…ELDN), 201–239 (VKSE…PQED), 240–278 (LEAL…GPEI), 279–321 (TKTD…RENV), 322–360 (IMSQ…GKDN), 361–399 (TIEH…GIRQ), 400–438 (LSQS…GVEF), 439–477 (FDEK…GKEW), 478–516 (AHAT…GQDI), 517–555 (TTKH…DNST), and 556–589 (LQSE…LSLA). Positions 8-399 (DSLYPIAVLI…CVNEVIGIRQ (392 aa)) are PP2A subunit B binding. A polyoma small and medium T antigens Binding region spans residues 47 to 321 (TRSELLPFLT…NLSADCRENV (275 aa)). The tract at residues 85–239 (YVHCLLPPLE…NIAQLLPQED (155 aa)) is SV40 small T antigen binding. The residue at position 280 (Lys280) is an N6-acetyllysine. The segment at 400-589 (LSQSLLPAIV…QEALTVLSLA (190 aa)) is PP2A subunit C binding.

It belongs to the phosphatase 2A regulatory subunit A family. PP2A consists of a common heterodimeric core enzyme, composed of PPP2CA a 36 kDa catalytic subunit (subunit C) and PPP2R1A a 65 kDa constant regulatory subunit (PR65 or subunit A), that associates with a variety of regulatory subunits. Proteins that associate with the core dimer include three families of regulatory subunits B (the R2/B/PR55/B55, R3/B''/PR72/PR130/PR59 and R5/B'/B56 families), the 48 kDa variable regulatory subunit, viral proteins, and cell signaling molecules. Found in a complex with at least ARL2, PPP2CB, PPP2R1A, PPP2R2A, PPP2R5E and TBCD. Interacts with the PP2A C catalytic subunit PPP2CA. Interacts with the PP2A B subunit PPP2R2A. Interacts with the PP2A B subunit PPP2R5D. Interacts with FOXO1; the interaction dephosphorylates FOXO1 on AKT-mediated phosphorylation sites. Interacts with IPO9. Interacts with TP53 and SGO1. Interacts with PLA2G16; this interaction might decrease PP2A activity. Interacts with CTTNBP2NL. Interacts with GNA12; the interaction promotes protein phosphatase 2A activation causing dephosphorylation of MAPT. Interacts with CIP2A; this interaction stabilizes CIP2A. Interacts with PABIR1/FAM122A. Interacts with ADCY8; antagonizes interaction between ADCY8 and calmodulin. Interacts with CRTC3 (when phosphorylated at 'Ser-391'). Interacts with SPRY2. Part of the core of STRIPAK complexes composed of PP2A catalytic and scaffolding subunits, the striatins (PP2A regulatory subunits), the striatin-associated proteins MOB4, STRIP1 and STRIP2, PDCD10 and members of the STE20 kinases, such as STK24 and STK26. Component of the Integrator-PP2A (INTAC) complex, composed of the Integrator core complex and protein phosphatase 2A subunits PPP2CA and PPP2R1A. In terms of assembly, (Microbial infection) Interacts with JC virus small t antigen; this interaction inhibits PPP2R1A activity.

It localises to the cytoplasm. The protein resides in the nucleus. The protein localises to the chromosome. Its subcellular location is the centromere. It is found in the lateral cell membrane. It localises to the cell projection. The protein resides in the dendrite. Its function is as follows. The PR65 subunit of protein phosphatase 2A serves as a scaffolding molecule to coordinate the assembly of the catalytic subunit and a variable regulatory B subunit. Upon interaction with GNA12 promotes dephosphorylation of microtubule associated protein TAU/MAPT. Required for proper chromosome segregation and for centromeric localization of SGO1 in mitosis. Together with RACK1 adapter, mediates dephosphorylation of AKT1 at 'Ser-473', preventing AKT1 activation and AKT-mTOR signaling pathway. Dephosphorylation of AKT1 is essential for regulatory T-cells (Treg) homeostasis and stability. Part of the striatin-interacting phosphatase and kinase (STRIPAK) complexes. STRIPAK complexes have critical roles in protein (de)phosphorylation and are regulators of multiple signaling pathways including Hippo, MAPK, nuclear receptor and cytoskeleton remodeling. Different types of STRIPAK complexes are involved in a variety of biological processes such as cell growth, differentiation, apoptosis, metabolism and immune regulation. Key mediator of a quality checkpoint during transcription elongation as part of the Integrator-PP2A (INTAC) complex. The INTAC complex drives premature transcription termination of transcripts that are unfavorably configured for transcriptional elongation: within the INTAC complex, acts as a scaffolding subunit for PPP2CA, which catalyzes dephosphorylation of the C-terminal domain (CTD) of Pol II subunit POLR2A/RPB1 and SUPT5H/SPT5, thereby preventing transcriptional elongation. Regulates the recruitment of the SKA complex to kinetochores. The polypeptide is Serine/threonine-protein phosphatase 2A 65 kDa regulatory subunit A alpha isoform (Homo sapiens (Human)).